A 683-amino-acid chain; its full sequence is DNA ligase (683 aa).

NAD(+) contacts are provided by residues 42–46 (DAEYD), 91–92 (SL), and E122. Catalysis depends on K124, which acts as the N6-AMP-lysine intermediate. NAD(+) contacts are provided by R145, E182, K299, and K323. C417, C420, C435, and C441 together coordinate Zn(2+). In terms of domain architecture, BRCT spans 602-683 (APQGVLAGKT…MRKLLEGQTT (82 aa)).

This sequence belongs to the NAD-dependent DNA ligase family. LigA subfamily. Requires Mg(2+) as cofactor. Mn(2+) is required as a cofactor.

The enzyme catalyses NAD(+) + (deoxyribonucleotide)n-3'-hydroxyl + 5'-phospho-(deoxyribonucleotide)m = (deoxyribonucleotide)n+m + AMP + beta-nicotinamide D-nucleotide.. In terms of biological role, DNA ligase that catalyzes the formation of phosphodiester linkages between 5'-phosphoryl and 3'-hydroxyl groups in double-stranded DNA using NAD as a coenzyme and as the energy source for the reaction. It is essential for DNA replication and repair of damaged DNA. This is DNA ligase from Paraburkholderia phymatum (strain DSM 17167 / CIP 108236 / LMG 21445 / STM815) (Burkholderia phymatum).